A 614-amino-acid chain; its full sequence is Putative ABC transporter ATP-binding protein MA_1747 (614 aa).

ABC transporter domains lie at 11 to 251 (VRLE…KLGI) and 319 to 552 (VLIE…AGLL). ATP is bound by residues 45–52 (GPSGCGKS) and 352–359 (GHNGAGKT).

This sequence belongs to the ABC transporter superfamily.

The protein localises to the cell membrane. Functionally, probably part of an ABC transporter complex. Responsible for energy coupling to the transport system. This is Putative ABC transporter ATP-binding protein MA_1747 from Methanosarcina acetivorans (strain ATCC 35395 / DSM 2834 / JCM 12185 / C2A).